Consider the following 226-residue polypeptide: N-(5'-phosphoribosyl)anthranilate isomerase (226 aa).

This sequence belongs to the TrpF family.

It carries out the reaction N-(5-phospho-beta-D-ribosyl)anthranilate = 1-(2-carboxyphenylamino)-1-deoxy-D-ribulose 5-phosphate. The protein operates within amino-acid biosynthesis; L-tryptophan biosynthesis; L-tryptophan from chorismate: step 3/5. The polypeptide is N-(5'-phosphoribosyl)anthranilate isomerase (Synechococcus sp. (strain JA-3-3Ab) (Cyanobacteria bacterium Yellowstone A-Prime)).